The sequence spans 1214 residues: BOS complex subunit NOMO1 (1214 aa).

A signal peptide spans 1–23 (MRAGRCAAALLLLLLSGAGRAIG). Residues 24–1150 (SEDIVVGCGG…RKLPEQDIAQ (1127 aa)) lie on the Extracellular side of the membrane. N-linked (GlcNAc...) asparagine glycans are attached at residues Asn-42, Asn-210, and Asn-610. Residues 692 to 720 (KSAQELRREQQLAEIETRRQEREKNGKEE) adopt a coiled-coil conformation. Positions 708-726 (TRRQEREKNGKEEGEEGRA) are enriched in basic and acidic residues. The disordered stretch occupies residues 708–733 (TRRQEREKNGKEEGEEGRARPPGQEM). The helical transmembrane segment at 1151 to 1167 (GSYIALPLTLLLLLAGY) threads the bilayer. Residues 1168-1214 (NHDKLIPLLLQLTSRLQGVRALGQAASDSSGPEDMKRQTKKQKTRRT) lie on the Cytoplasmic side of the membrane. Residues 1190–1214 (GQAASDSSGPEDMKRQTKKQKTRRT) form a disordered region. A phosphoserine mark is found at Ser-1196 and Ser-1197. The span at 1205–1214 (QTKKQKTRRT) shows a compositional bias: basic residues.

In terms of assembly, component of the back of Sec61 (BOS) complex, composed of NCLN/Nicalin, NOMO (NOMO1, NOMO2 or NOMO3) and TMEM147. The BOS complex is part of the multi-pass translocon (MPT) complex, composed of three subcomplexes, the GEL complex (composed of RAB5IF/OPTI and TMCO1), the BOS complex (composed of NCLN/Nicalin, NOMO and TMEM147) and the PAT complex (composed of WDR83OS/Asterix and CCDC47). The MPT complex associates with the SEC61 complex.

It is found in the endoplasmic reticulum membrane. Component of the multi-pass translocon (MPT) complex that mediates insertion of multi-pass membrane proteins into the lipid bilayer of membranes. The MPT complex takes over after the SEC61 complex: following membrane insertion of the first few transmembrane segments of proteins by the SEC61 complex, the MPT complex occludes the lateral gate of the SEC61 complex to promote insertion of subsequent transmembrane regions. This chain is BOS complex subunit NOMO1, found in Mus musculus (Mouse).